Here is a 95-residue protein sequence, read N- to C-terminus: Probable dolichol-phosphate mannosyltransferase subunit 3 (95 aa).

A run of 2 helical transmembrane segments spans residues Ala10–Leu30 and Ala44–Val64.

This sequence belongs to the DPM3 family.

Its subcellular location is the endoplasmic reticulum membrane. The protein operates within protein modification; protein glycosylation. Functionally, stabilizer subunit of the dolichol-phosphate-mannose synthase complex. The protein is Probable dolichol-phosphate mannosyltransferase subunit 3 (dpm-3) of Caenorhabditis elegans.